We begin with the raw amino-acid sequence, 223 residues long: Putative NAD(P)H nitroreductase SAUSA300_2462 (223 aa).

This sequence belongs to the nitroreductase family. It depends on FMN as a cofactor.

The protein is Putative NAD(P)H nitroreductase SAUSA300_2462 of Staphylococcus aureus (strain USA300).